The primary structure comprises 163 residues: Neurotrophin-3 (163 aa).

An N-terminal signal peptide occupies residues 1 to 3 (IQS). Positions 4–119 (SSMDQGILTE…VLNRTSRRKR (116 aa)) are excised as a propeptide. The interval 36–61 (QTARTKDGMQTTVKKTEAEADARASQ) is disordered. Residues 49–61 (KKTEAEADARASQ) are compositionally biased toward basic and acidic residues. A glycan (N-linked (GlcNAc...) asparagine) is linked at Asn112.

This sequence belongs to the NGF-beta family.

It is found in the secreted. Seems to promote the survival of visceral and proprioceptive sensory neurons. In Boa constrictor (Boa), this protein is Neurotrophin-3 (NTF3).